Here is a 61-residue protein sequence, read N- to C-terminus: Small ribosomal subunit protein uS14 (61 aa).

Zn(2+) contacts are provided by Cys-24, Cys-27, Cys-40, and Cys-43.

The protein belongs to the universal ribosomal protein uS14 family. Zinc-binding uS14 subfamily. In terms of assembly, part of the 30S ribosomal subunit. Contacts proteins S3 and S10. Zn(2+) is required as a cofactor.

Its function is as follows. Binds 16S rRNA, required for the assembly of 30S particles and may also be responsible for determining the conformation of the 16S rRNA at the A site. This Helicobacter pylori (strain G27) protein is Small ribosomal subunit protein uS14.